The following is a 284-amino-acid chain: Putative ABC transporter ATP-binding protein SCO5958 (284 aa).

The ABC transporter domain occupies 15-250 (VALRGAAFAY…DLLRRAGLRL (236 aa)). 48–55 (GRNGSGKT) contacts ATP.

The protein belongs to the ABC transporter superfamily.

Its subcellular location is the cell membrane. Probably part of an ABC transporter complex. Responsible for energy coupling to the transport system. This chain is Putative ABC transporter ATP-binding protein SCO5958, found in Streptomyces coelicolor (strain ATCC BAA-471 / A3(2) / M145).